A 446-amino-acid chain; its full sequence is Probable arogenate/prephenate dehydrogenase (446 aa).

The 283-residue stretch at 6–288 (LTISIIGGTD…SEAKRGAYYS (283 aa)) folds into the Prephenate/arogenate dehydrogenase domain.

The protein in the N-terminal section; belongs to the prephenate/arogenate dehydrogenase family.

The protein is Probable arogenate/prephenate dehydrogenase of Methanocaldococcus jannaschii (strain ATCC 43067 / DSM 2661 / JAL-1 / JCM 10045 / NBRC 100440) (Methanococcus jannaschii).